The primary structure comprises 343 residues: N-acetyl-gamma-glutamyl-phosphate reductase (343 aa).

Cys147 is an active-site residue.

The protein belongs to the NAGSA dehydrogenase family. Type 1 subfamily.

Its subcellular location is the cytoplasm. It catalyses the reaction N-acetyl-L-glutamate 5-semialdehyde + phosphate + NADP(+) = N-acetyl-L-glutamyl 5-phosphate + NADPH + H(+). The protein operates within amino-acid biosynthesis; L-arginine biosynthesis; N(2)-acetyl-L-ornithine from L-glutamate: step 3/4. Functionally, catalyzes the NADPH-dependent reduction of N-acetyl-5-glutamyl phosphate to yield N-acetyl-L-glutamate 5-semialdehyde. The polypeptide is N-acetyl-gamma-glutamyl-phosphate reductase (Listeria monocytogenes serovar 1/2a (strain ATCC BAA-679 / EGD-e)).